We begin with the raw amino-acid sequence, 513 residues long: ATP synthase subunit alpha (513 aa).

169–176 is a binding site for ATP; it reads GDRQTGKS.

Belongs to the ATPase alpha/beta chains family. F-type ATPases have 2 components, CF(1) - the catalytic core - and CF(0) - the membrane proton channel. CF(1) has five subunits: alpha(3), beta(3), gamma(1), delta(1), epsilon(1). CF(0) has three main subunits: a(1), b(2) and c(9-12). The alpha and beta chains form an alternating ring which encloses part of the gamma chain. CF(1) is attached to CF(0) by a central stalk formed by the gamma and epsilon chains, while a peripheral stalk is formed by the delta and b chains.

The protein localises to the cell membrane. It catalyses the reaction ATP + H2O + 4 H(+)(in) = ADP + phosphate + 5 H(+)(out). In terms of biological role, produces ATP from ADP in the presence of a proton gradient across the membrane. The alpha chain is a regulatory subunit. In Baumannia cicadellinicola subsp. Homalodisca coagulata, this protein is ATP synthase subunit alpha.